The sequence spans 227 residues: 7-cyano-7-deazaguanine synthase (227 aa).

16 to 26 (FSGGQDSTTCL) serves as a coordination point for ATP. Residues Cys-194, Cys-202, Cys-205, and Cys-208 each contribute to the Zn(2+) site.

The protein belongs to the QueC family. The cofactor is Zn(2+).

The catalysed reaction is 7-carboxy-7-deazaguanine + NH4(+) + ATP = 7-cyano-7-deazaguanine + ADP + phosphate + H2O + H(+). It functions in the pathway purine metabolism; 7-cyano-7-deazaguanine biosynthesis. Its function is as follows. Catalyzes the ATP-dependent conversion of 7-carboxy-7-deazaguanine (CDG) to 7-cyano-7-deazaguanine (preQ(0)). This is 7-cyano-7-deazaguanine synthase from Haemophilus influenzae (strain 86-028NP).